Reading from the N-terminus, the 206-residue chain is Ribosomal RNA small subunit methyltransferase G (206 aa).

Residues glycine 73, leucine 78, 124-125 (VE), and arginine 139 contribute to the S-adenosyl-L-methionine site.

It belongs to the methyltransferase superfamily. RNA methyltransferase RsmG family.

It is found in the cytoplasm. The catalysed reaction is guanosine(527) in 16S rRNA + S-adenosyl-L-methionine = N(7)-methylguanosine(527) in 16S rRNA + S-adenosyl-L-homocysteine. Functionally, specifically methylates the N7 position of guanine in position 527 of 16S rRNA. The polypeptide is Ribosomal RNA small subunit methyltransferase G (Pectobacterium carotovorum subsp. carotovorum (strain PC1)).